Consider the following 164-residue polypeptide: UPF0304 protein PC1_2778 (164 aa).

Belongs to the UPF0304 family.

This chain is UPF0304 protein PC1_2778, found in Pectobacterium carotovorum subsp. carotovorum (strain PC1).